Consider the following 274-residue polypeptide: Putative septum site-determining protein MinD (274 aa).

22-29 (KGGVGKTT) serves as a coordination point for ATP.

The protein belongs to the ParA family. MinD subfamily.

Its subcellular location is the plastid. The protein resides in the chloroplast. Its function is as follows. ATPase required for the correct placement of the division site. This is Putative septum site-determining protein MinD (minD-A) from Nephroselmis olivacea (Green alga).